A 324-amino-acid polypeptide reads, in one-letter code: Serine carboxypeptidase II-1 (324 aa).

Asn-10 carries N-linked (GlcNAc...) asparagine glycosylation. Ser-41 is an active-site residue. 2 disulfide bridges follow: Cys-109-Cys-121 and Cys-145-Cys-170. A propeptide spans 150–162 (linker peptide); it reads LHRRRLIKGRRPW. Asn-191 is a glycosylation site (N-linked (GlcNAc...) asparagine). Residues Asp-239 and His-291 contribute to the active site.

It belongs to the peptidase S10 family. In terms of assembly, carboxypeptidase II is a dimer, where each monomer is composed of two chains linked by a disulfide bond. In terms of processing, the linker peptide is endoproteolytically excised during enzyme maturation.

It catalyses the reaction Preferential release of a C-terminal arginine or lysine residue.. This chain is Serine carboxypeptidase II-1 (CXP;2-1), found in Hordeum vulgare (Barley).